Consider the following 359-residue polypeptide: Acyl-CoA desaturase (359 aa).

Residues 1 to 72 (MPAHLLQEEI…EGPKPKLEYV (72 aa)) lie on the Cytoplasmic side of the membrane. Residues 73–93 (WRNIILMGLLHLGALYGITLI) traverse the membrane as a helical segment. Substrate is bound at residue Asn-75. At 94 to 97 (PTCK) the chain is on the lumenal side. A helical transmembrane segment spans residues 98-118 (IYTFLWVLFYYVISALGITAG). Residues 119 to 217 (VHRLWSHRTY…EKLVMFQRRY (99 aa)) are Cytoplasmic-facing. Residues His-120 and His-125 each coordinate Fe cation. Positions 120-125 (HRLWSH) match the Histidine box-1 motif. The substrate site is built by Asn-148, Arg-155, and Asp-156. His-157, His-160, and His-161 together coordinate Fe cation. A Histidine box-2 motif is present at residues 157–161 (HRAHH). Substrate is bound by residues Arg-188 and Lys-189. Ser-203 is subject to Phosphoserine. The helical transmembrane segment at 218-237 (YKPGVLLLCFILPTLVPWYL) threads the bilayer. Residues 238–241 (WGES) lie on the Lumenal side of the membrane. A helical transmembrane segment spans residues 242–263 (FQNSLFFATFLRYAVVLNATWL). Residue Trp-262 participates in substrate binding. Residues 264–359 (VNSAAHMYGY…RTGEESYKSG (96 aa)) lie on the Cytoplasmic side of the membrane. 4 residues coordinate Fe cation: His-269, His-298, His-301, and His-302. Residues 298–302 (HNYHH) carry the Histidine box-3 motif.

Belongs to the fatty acid desaturase type 1 family. Requires Fe(2+) as cofactor.

It is found in the endoplasmic reticulum membrane. It catalyses the reaction octadecanoyl-CoA + 2 Fe(II)-[cytochrome b5] + O2 + 2 H(+) = (9Z)-octadecenoyl-CoA + 2 Fe(III)-[cytochrome b5] + 2 H2O. In terms of biological role, stearoyl-CoA desaturase that utilizes O(2) and electrons from reduced cytochrome b5 to introduce the first double bond into saturated fatty acyl-CoA substrates. Catalyzes the insertion of a cis double bond at the delta-9 position into fatty acyl-CoA substrates including palmitoyl-CoA and stearoyl-CoA. Gives rise to a mixture of 16:1 and 18:1 unsaturated fatty acids. Plays an important role in lipid biosynthesis. Plays an important role in regulating the expression of genes that are involved in lipogenesis and in regulating mitochondrial fatty acid oxidation. Plays an important role in body energy homeostasis. Contributes to the biosynthesis of membrane phospholipids, cholesterol esters and triglycerides. The protein is Acyl-CoA desaturase (SCD) of Ovis aries (Sheep).